The sequence spans 546 residues: Low-affinity methionine permease (546 aa).

At 1-70 (MEPLLFNSGK…QGRHLGVFST (70 aa)) the chain is on the extracellular side. A helical membrane pass occupies residues 71-91 (VVLFVSRIMGSGIFAVPSVIL). Topologically, residues 92-98 (LNTGGNK) are cytoplasmic. The chain crosses the membrane as a helical span at residues 99 to 119 (LIYFAIWVFSAAIAFAGLYLF). Over 120-148 (LEFGSWIPKSGGRKNFLERSFERPRLLIS) the chain is Extracellular. A helical transmembrane segment spans residues 149 to 169 (VVFSCYSVLTGYALTGSIVFG). Topologically, residues 170–188 (KYVLSAFGVTDDSWSKYVS) are cytoplasmic. Residues 189–209 (ISFIIFAVLIHGVSVRHGVFI) traverse the membrane as a helical segment. Over 210-213 (QNAL) the chain is Extracellular. A helical membrane pass occupies residues 214–234 (GGLKLIMIVLMCFAGLYTLFF). Residues 235 to 254 (YKSTGQVAWDLPVTQVEKDS) are Cytoplasmic-facing. The helical transmembrane segment at 255-275 (LLSVSSIATAFISSFFCFSGW) threads the bilayer. Topologically, residues 276 to 297 (DTVHTVTSEIKNPVKTLKVSGP) are extracellular. A helical membrane pass occupies residues 298-318 (LSLIICFVCYTMMNVAYLKVL). A topological domain (cytoplasmic) is located at residue threonine 319. The helical transmembrane segment at 320–340 (YEEIVSAGPLVGSVLFTKLFG) threads the bilayer. Over 341–346 (PRVGGK) the chain is Extracellular. A helical transmembrane segment spans residues 347–367 (FIAFSIAISAASNILVVIYSI). Over 368 to 393 (SRVNQEIFKEGYLPFSIHMSKNWPFD) the chain is Cytoplasmic. The helical transmembrane segment at 394 to 414 (APLPSISLCGFITIAWILILP) threads the bilayer. The Extracellular portion of the chain corresponds to 415-423 (KEGESFNYL). The helical transmembrane segment at 424–444 (VSMDGYGNQFFLLLVAIGLFI) threads the bilayer. Residues 445 to 459 (WRFKHKNEVPEIRAS) lie on the Cytoplasmic side of the membrane. A helical transmembrane segment spans residues 460-480 (TFGVLAIITLSLYMLMAPFFA). Over 481 to 494 (DPSLNRVGFLPPYQ) the chain is Extracellular. A helical transmembrane segment spans residues 495 to 515 (IMSLLVIVACFFFWLVKFVLL). Residues 516–546 (PKFFHYKLLPKITYLHDGLIVTEWVKKPCLC) lie on the Cytoplasmic side of the membrane.

This sequence to yeast high affinity methionine permease (MUP1).

The protein localises to the membrane. Functionally, very low affinity permease for methionine. The protein is Low-affinity methionine permease (MUP3) of Saccharomyces cerevisiae (strain ATCC 204508 / S288c) (Baker's yeast).